A 38-amino-acid chain; its full sequence is Photosystem II reaction center protein L (38 aa).

Residues 17–37 traverse the membrane as a helical segment; the sequence is SLYWGLLLIFVLAVPFSNYFF.

Belongs to the PsbL family. PSII is composed of 1 copy each of membrane proteins PsbA, PsbB, PsbC, PsbD, PsbE, PsbF, PsbH, PsbI, PsbJ, PsbK, PsbL, PsbM, PsbT, PsbX, PsbY, PsbZ, Psb30/Ycf12, at least 3 peripheral proteins of the oxygen-evolving complex and a large number of cofactors. It forms dimeric complexes.

It localises to the plastid. The protein localises to the chloroplast thylakoid membrane. Functionally, one of the components of the core complex of photosystem II (PSII). PSII is a light-driven water:plastoquinone oxidoreductase that uses light energy to abstract electrons from H(2)O, generating O(2) and a proton gradient subsequently used for ATP formation. It consists of a core antenna complex that captures photons, and an electron transfer chain that converts photonic excitation into a charge separation. This subunit is found at the monomer-monomer interface and is required for correct PSII assembly and/or dimerization. The protein is Photosystem II reaction center protein L of Cedrus deodara (Deodar cedar).